The chain runs to 241 residues: 1-(5-phosphoribosyl)-5-[(5-phosphoribosylamino)methylideneamino] imidazole-4-carboxamide isomerase (241 aa).

Asp7 serves as the catalytic Proton acceptor. Residue Asp129 is the Proton donor of the active site.

The protein belongs to the HisA/HisF family.

Its subcellular location is the cytoplasm. It carries out the reaction 1-(5-phospho-beta-D-ribosyl)-5-[(5-phospho-beta-D-ribosylamino)methylideneamino]imidazole-4-carboxamide = 5-[(5-phospho-1-deoxy-D-ribulos-1-ylimino)methylamino]-1-(5-phospho-beta-D-ribosyl)imidazole-4-carboxamide. It participates in amino-acid biosynthesis; L-histidine biosynthesis; L-histidine from 5-phospho-alpha-D-ribose 1-diphosphate: step 4/9. This Buchnera aphidicola subsp. Baizongia pistaciae (strain Bp) protein is 1-(5-phosphoribosyl)-5-[(5-phosphoribosylamino)methylideneamino] imidazole-4-carboxamide isomerase.